Reading from the N-terminus, the 424-residue chain is Serine/threonine-protein kinase H1 (424 aa).

Gly-2 is lipidated: N-myristoyl glycine. Cys-3 is lipidated: S-palmitoyl cysteine. Residues 49–81 are disordered; that stretch reads KGGFPAASQGANPSPGTPRTSHTEPPSEPPRRA. Residues 57–72 are compositionally biased toward polar residues; that stretch reads QGANPSPGTPRTSHTE. The 258-residue stretch at 98-355 folds into the Protein kinase domain; sequence YDIKALIGRG…ALQALRHPWV (258 aa). ATP is bound by residues 104 to 112 and Lys-127; that span reads IGRGSFSRV. Catalysis depends on Asp-218, which acts as the Proton acceptor. The tract at residues 378-407 is disordered; that stretch reads RASSRCQSTKSAQSTRSSRSTRSNKSRRVR. 2 positions are modified to phosphoserine; by autocatalysis: Ser-380 and Ser-381. Positions 385–398 are enriched in low complexity; sequence STKSAQSTRSSRST.

Belongs to the protein kinase superfamily. CAMK Ser/Thr protein kinase family. Homodimer. Post-translationally, autophosphorylated on serine residues. In terms of processing, myristoylated. Required for membrane association. Prerequisite for palmitoylation to occur. Palmitoylated.

The protein resides in the golgi apparatus. It is found in the cytoplasm. The protein localises to the cytoskeleton. It localises to the microtubule organizing center. Its subcellular location is the centrosome. The protein resides in the nucleus speckle. It is found in the endoplasmic reticulum membrane. The protein localises to the cell membrane. The enzyme catalyses L-seryl-[protein] + ATP = O-phospho-L-seryl-[protein] + ADP + H(+). The catalysed reaction is L-threonyl-[protein] + ATP = O-phospho-L-threonyl-[protein] + ADP + H(+). Activity depends on Ca(2+) concentration. Functionally, may be a SFC-associated serine kinase (splicing factor compartment-associated serine kinase) with a role in intranuclear SR protein (non-snRNP splicing factors containing a serine/arginine-rich domain) trafficking and pre-mRNA processing. This Bos taurus (Bovine) protein is Serine/threonine-protein kinase H1 (PSKH1).